The primary structure comprises 212 residues: Ribonuclease HII (212 aa).

One can recognise an RNase H type-2 domain in the interval 1–206 (MICGVDEAGK…VKNLLHQKNQ (206 aa)). Residues Asp6, Glu7, and Asp101 each coordinate a divalent metal cation.

It belongs to the RNase HII family. The cofactor is Mn(2+). It depends on Mg(2+) as a cofactor.

It localises to the cytoplasm. It catalyses the reaction Endonucleolytic cleavage to 5'-phosphomonoester.. Endonuclease that specifically degrades the RNA of RNA-DNA hybrids. In Methanospirillum hungatei JF-1 (strain ATCC 27890 / DSM 864 / NBRC 100397 / JF-1), this protein is Ribonuclease HII.